The chain runs to 173 residues: ATP synthase subunit b (173 aa).

The chain crosses the membrane as a helical span at residues 12-32 (LDVNPGLVVWTLVTFLVVVLV).

This sequence belongs to the ATPase B chain family. As to quaternary structure, F-type ATPases have 2 components, F(1) - the catalytic core - and F(0) - the membrane proton channel. F(1) has five subunits: alpha(3), beta(3), gamma(1), delta(1), epsilon(1). F(0) has three main subunits: a(1), b(2) and c(10-14). The alpha and beta chains form an alternating ring which encloses part of the gamma chain. F(1) is attached to F(0) by a central stalk formed by the gamma and epsilon chains, while a peripheral stalk is formed by the delta and b chains.

The protein localises to the cell inner membrane. Its function is as follows. F(1)F(0) ATP synthase produces ATP from ADP in the presence of a proton or sodium gradient. F-type ATPases consist of two structural domains, F(1) containing the extramembraneous catalytic core and F(0) containing the membrane proton channel, linked together by a central stalk and a peripheral stalk. During catalysis, ATP synthesis in the catalytic domain of F(1) is coupled via a rotary mechanism of the central stalk subunits to proton translocation. In terms of biological role, component of the F(0) channel, it forms part of the peripheral stalk, linking F(1) to F(0). This chain is ATP synthase subunit b, found in Leptospira interrogans serogroup Icterohaemorrhagiae serovar copenhageni (strain Fiocruz L1-130).